The primary structure comprises 371 residues: Bifunctional enzyme IspD/IspF (371 aa).

Residues 1–214 (MNSCFIILAG…NSDIKFNNLI (214 aa)) form a 2-C-methyl-D-erythritol 4-phosphate cytidylyltransferase region. Residues 215–371 (KFGIGFDVHR…EVIASVIKND (157 aa)) are 2-C-methyl-D-erythritol 2,4-cyclodiphosphate synthase. Residues aspartate 221 and histidine 223 each contribute to the a divalent metal cation site. 4-CDP-2-C-methyl-D-erythritol 2-phosphate contacts are provided by residues 221-223 (DVH) and 247-248 (HS). Histidine 255 provides a ligand contact to a divalent metal cation. 4-CDP-2-C-methyl-D-erythritol 2-phosphate is bound by residues 269 to 271 (DIG), 274 to 278 (FSDKN), and lysine 355.

It in the N-terminal section; belongs to the IspD/TarI cytidylyltransferase family. IspD subfamily. In the C-terminal section; belongs to the IspF family. The cofactor is a divalent metal cation.

The enzyme catalyses 2-C-methyl-D-erythritol 4-phosphate + CTP + H(+) = 4-CDP-2-C-methyl-D-erythritol + diphosphate. The catalysed reaction is 4-CDP-2-C-methyl-D-erythritol 2-phosphate = 2-C-methyl-D-erythritol 2,4-cyclic diphosphate + CMP. The protein operates within isoprenoid biosynthesis; isopentenyl diphosphate biosynthesis via DXP pathway; isopentenyl diphosphate from 1-deoxy-D-xylulose 5-phosphate: step 2/6. It participates in isoprenoid biosynthesis; isopentenyl diphosphate biosynthesis via DXP pathway; isopentenyl diphosphate from 1-deoxy-D-xylulose 5-phosphate: step 4/6. Bifunctional enzyme that catalyzes the formation of 4-diphosphocytidyl-2-C-methyl-D-erythritol from CTP and 2-C-methyl-D-erythritol 4-phosphate (MEP) (IspD), and catalyzes the conversion of 4-diphosphocytidyl-2-C-methyl-D-erythritol 2-phosphate (CDP-ME2P) to 2-C-methyl-D-erythritol 2,4-cyclodiphosphate (ME-CPP) with a corresponding release of cytidine 5-monophosphate (CMP) (IspF). The polypeptide is Bifunctional enzyme IspD/IspF (Pelagibacter ubique (strain HTCC1062)).